Reading from the N-terminus, the 172-residue chain is Bifunctional protein PyrR (172 aa).

A PRPP-binding motif is present at residues 90–102; the sequence is LVLIDDVLMSGRT.

It belongs to the purine/pyrimidine phosphoribosyltransferase family. PyrR subfamily.

It carries out the reaction UMP + diphosphate = 5-phospho-alpha-D-ribose 1-diphosphate + uracil. In terms of biological role, regulates the transcription of the pyrimidine nucleotide (pyr) operon in response to exogenous pyrimidines. Its function is as follows. Also displays a weak uracil phosphoribosyltransferase activity which is not physiologically significant. In Pseudomonas putida (strain W619), this protein is Bifunctional protein PyrR.